The chain runs to 374 residues: Glutamate 5-kinase (374 aa).

Residue Lys9 coordinates ATP. 3 residues coordinate substrate: Ser49, Asp136, and Asn148. Residues 168 to 169 and 210 to 216 each bind ATP; these read TD and TGGMRSK. A PUA domain is found at 276–354; that stretch reads SGTITVDSGA…EEARQYSYLH (79 aa).

It belongs to the glutamate 5-kinase family.

Its subcellular location is the cytoplasm. The enzyme catalyses L-glutamate + ATP = L-glutamyl 5-phosphate + ADP. Its pathway is amino-acid biosynthesis; L-proline biosynthesis; L-glutamate 5-semialdehyde from L-glutamate: step 1/2. Its function is as follows. Catalyzes the transfer of a phosphate group to glutamate to form L-glutamate 5-phosphate. In Geobacillus thermodenitrificans (strain NG80-2), this protein is Glutamate 5-kinase.